Here is a 119-residue protein sequence, read N- to C-terminus: Immunoglobulin heavy variable 3-15 (119 aa).

A signal peptide spans 1–19 (MEFGLSWIFLAAILKGVQC). A framework-1 region spans residues 20–44 (EVQLVESGGGLVKPGGSLRLSCAAS). In terms of domain architecture, Ig-like spans 20 to 119 (EVQLVESGGG…EDTAVYYCTT (100 aa)). Cys41 and Cys117 form a disulfide bridge. The segment at 45-52 (GFTFSNAW) is complementarity-determining-1. The framework-2 stretch occupies residues 53 to 69 (MSWVRQAPGKGLEWVGR). Residues 70–79 (IKSKTDGGTT) are complementarity-determining-2. A framework-3 region spans residues 80 to 117 (DYAAPVKGRFTISRDDSKNTLYLQMNSLKTEDTAVYYC). The segment at 118–119 (TT) is complementarity-determining-3.

In terms of assembly, immunoglobulins are composed of two identical heavy chains and two identical light chains; disulfide-linked.

The protein localises to the secreted. Its subcellular location is the cell membrane. V region of the variable domain of immunoglobulin heavy chains that participates in the antigen recognition. Immunoglobulins, also known as antibodies, are membrane-bound or secreted glycoproteins produced by B lymphocytes. In the recognition phase of humoral immunity, the membrane-bound immunoglobulins serve as receptors which, upon binding of a specific antigen, trigger the clonal expansion and differentiation of B lymphocytes into immunoglobulins-secreting plasma cells. Secreted immunoglobulins mediate the effector phase of humoral immunity, which results in the elimination of bound antigens. The antigen binding site is formed by the variable domain of one heavy chain, together with that of its associated light chain. Thus, each immunoglobulin has two antigen binding sites with remarkable affinity for a particular antigen. The variable domains are assembled by a process called V-(D)-J rearrangement and can then be subjected to somatic hypermutations which, after exposure to antigen and selection, allow affinity maturation for a particular antigen. This is Immunoglobulin heavy variable 3-15 from Homo sapiens (Human).